The chain runs to 348 residues: Rhodopsin (348 aa).

Met-1 carries the N-acetylmethionine modification. The Extracellular segment spans residues 1–36 (MNGTEGPNFYVPYSNKSGVVRSPYEEPQYYLAEPWM). Asn-2 and Asn-15 each carry an N-linked (GlcNAc...) asparagine glycan. The helical transmembrane segment at 37-61 (FSCLAAYMFMLIVLGFPINFLTLYV) threads the bilayer. The Cytoplasmic segment spans residues 62-73 (TIQHKKLRTPLN). The chain crosses the membrane as a helical span at residues 74 to 96 (YILLNLAVADLFMVICGFTTTLV). Residues 97 to 110 (TSLNGYFVFGTTGC) lie on the Extracellular side of the membrane. Cys-110 and Cys-187 are oxidised to a cystine. Residues 111-133 (LVEGFFATTGGEVALWALVVLAI) form a helical membrane-spanning segment. A 'Ionic lock' involved in activated form stabilization motif is present at residues 134–136 (ERY). Residues 134-152 (ERYIVVCKPMSNFRFGENH) are Cytoplasmic-facing. A helical transmembrane segment spans residues 153-173 (AIMGVAFTWIMALACSVPPIF). Residues 174–202 (GWSRYIPEGMQCSCGIDYYTLNPEFNNES) lie on the Extracellular side of the membrane. Zn(2+) is bound at residue Glu-201. Residues 203-224 (FVIYMFVVHFIIPLTVIFFCYG) traverse the membrane as a helical segment. Topologically, residues 225–252 (QLVFTVKEAAAQQQESATTQKAEKEVTR) are cytoplasmic. The chain crosses the membrane as a helical span at residues 253 to 274 (MVIIMVIAFLICWVPYASVAFY). Over 275-286 (IFTHQGSDFGPI) the chain is Extracellular. Gln-279 contacts Zn(2+). Residues 287 to 308 (FMTLPAFFAKSSSIYNPVIYIM) form a helical membrane-spanning segment. At Lys-296 the chain carries N6-(retinylidene)lysine. The Cytoplasmic portion of the chain corresponds to 309 to 348 (MNKQFRNCMITTLCCGKNPLGDDEASTTASKTETSQVAPA). 2 S-palmitoyl cysteine lipidation sites follow: Cys-322 and Cys-323. Residues 330-348 (DDEASTTASKTETSQVAPA) form an interaction with SAG region. Ser-334 carries the phosphoserine modification. Phosphothreonine is present on residues Thr-335 and Thr-336. Residue Ser-338 is modified to Phosphoserine. 2 positions are modified to phosphothreonine: Thr-340 and Thr-342. Position 343 is a phosphoserine (Ser-343).

The protein belongs to the G-protein coupled receptor 1 family. Opsin subfamily. As to quaternary structure, homodimer. May form a complex composed of RHO, GRK1 and RCVRN in a Ca(2+)-dependent manner; RCVRN prevents the interaction between GRK1 and RHO. Interacts with GRK1. Interacts (phosphorylated form) with SAG. Interacts with GNAT1. Interacts with GNAT3. SAG and G-proteins compete for a common binding site. Interacts with PRCD; the interaction promotes PRCD stability. Forms a complex with ASAP1 and ARF4. Forms a complex with ASAP1, RAB11A, Rabin8/RAB3IP, ARF4 and RAB11FIP3; the complex regulates Golgi-to-cilia rhodopsin/RHO transport in photoreceptors. Phosphorylated on some or all of the serine and threonine residues present in the C-terminal region. In terms of processing, contains one covalently linked retinal chromophore. Upon light absorption, the covalently bound 11-cis-retinal is converted to all-trans-retinal. After hydrolysis of the Schiff base and release of the covalently bound all-trans-retinal, active rhodopsin is regenerated by binding of a fresh molecule of 11-cis-retinal.

The protein localises to the membrane. It is found in the cell projection. It localises to the cilium. The protein resides in the photoreceptor outer segment. Its function is as follows. Photoreceptor required for image-forming vision at low light intensity. Required for photoreceptor cell viability after birth. Light-induced isomerization of 11-cis to all-trans retinal triggers a conformational change that activates signaling via G-proteins. Subsequent receptor phosphorylation mediates displacement of the bound G-protein alpha subunit by the arrestin SAG and terminates signaling. The chain is Rhodopsin (RHO) from Sminthopsis crassicaudata (Fat-tailed dunnart).